Consider the following 308-residue polypeptide: C-4 methylsterol oxidase (308 aa).

Residues 56 to 76 traverse the membrane as a helical segment; sequence LLFFLTHEIFYFGRCLPWAII. A Fatty acid hydroxylase domain is found at 145–282; that stretch reads WAVFFVLEDT…FRWWDFILDT (138 aa). Positions 160 to 164 match the Histidine box-1 motif; that stretch reads HRGLH. The short motif at 173–177 is the Histidine box-2 element; that stretch reads HKQHH. The Histidine box-3 signature appears at 257–263; the sequence is HHDEHHH.

It belongs to the sterol desaturase family. Fe cation serves as cofactor.

Its subcellular location is the endoplasmic reticulum membrane. It catalyses the reaction 4,4-dimethyl-5alpha-cholest-7-en-3beta-ol + 6 Fe(II)-[cytochrome b5] + 3 O2 + 5 H(+) = 4alpha-carboxy-4beta-methyl-5alpha-cholest-7-ene-3beta-ol + 6 Fe(III)-[cytochrome b5] + 4 H2O. It functions in the pathway steroid biosynthesis; zymosterol biosynthesis; zymosterol from lanosterol: step 3/6. C-4 methylsterol oxidase; part of the third module of ergosterol biosynthesis pathway that includes the late steps of the pathway. ERG25 is a catalytic component of the C-4 demethylation complex that catalyzes the conversion of 4,4-dimethylfecosterol into fecosterol via 4-methylfecosterol. Catalyzes the three-step monooxygenation required for the demethylation of 4,4-dimethyl and 4alpha-methylsterols. The third module or late pathway involves the ergosterol synthesis itself through consecutive reactions that mainly occur in the endoplasmic reticulum (ER) membrane. Firstly, the squalene synthase ERG9 catalyzes the condensation of 2 farnesyl pyrophosphate moieties to form squalene, which is the precursor of all steroids. Squalene synthase is crucial for balancing the incorporation of farnesyl diphosphate (FPP) into sterol and nonsterol isoprene synthesis. Secondly, the squalene epoxidase ERG1 catalyzes the stereospecific oxidation of squalene to (S)-2,3-epoxysqualene, which is considered to be a rate-limiting enzyme in steroid biosynthesis. Then, the lanosterol synthase ERG7 catalyzes the cyclization of (S)-2,3 oxidosqualene to lanosterol, a reaction that forms the sterol core. In the next steps, lanosterol is transformed to zymosterol through a complex process involving various demethylation, reduction and desaturation reactions. The lanosterol 14-alpha-demethylase ERG11 (also known as CYP51) catalyzes C14-demethylation of lanosterol to produce 4,4'-dimethyl cholesta-8,14,24-triene-3-beta-ol, which is critical for ergosterol biosynthesis. The C-14 reductase ERG24 reduces the C14=C15 double bond of 4,4-dimethyl-cholesta-8,14,24-trienol to produce 4,4-dimethyl-cholesta-8,24-dienol. 4,4-dimethyl-cholesta-8,24-dienol is substrate of the C-4 demethylation complex ERG25-ERG26-ERG27 in which ERG25 catalyzes the three-step monooxygenation required for the demethylation of 4,4-dimethyl and 4alpha-methylsterols, ERG26 catalyzes the oxidative decarboxylation that results in a reduction of the 3-beta-hydroxy group at the C-3 carbon to an oxo group, and ERG27 is responsible for the reduction of the keto group on the C-3. ERG28 has a role as a scaffold to help anchor ERG25, ERG26 and ERG27 to the endoplasmic reticulum and ERG29 regulates the activity of the iron-containing C4-methylsterol oxidase ERG25. Then, the sterol 24-C-methyltransferase ERG6 catalyzes the methyl transfer from S-adenosyl-methionine to the C-24 of zymosterol to form fecosterol. The C-8 sterol isomerase ERG2 catalyzes the reaction which results in unsaturation at C-7 in the B ring of sterols and thus converts fecosterol to episterol. The sterol-C5-desaturase ERG3 then catalyzes the introduction of a C-5 double bond in the B ring to produce 5-dehydroepisterol. The C-22 sterol desaturase ERG5 further converts 5-dehydroepisterol into ergosta-5,7,22,24(28)-tetraen-3beta-ol by forming the C-22(23) double bond in the sterol side chain. Finally, ergosta-5,7,22,24(28)-tetraen-3beta-ol is substrate of the C-24(28) sterol reductase ERG4 to produce ergosterol. This chain is C-4 methylsterol oxidase, found in Candida albicans (strain SC5314 / ATCC MYA-2876) (Yeast).